The primary structure comprises 562 residues: Catalase T (562 aa).

Active-site residues include histidine 64 and asparagine 137. Tyrosine 351 contacts heme.

This sequence belongs to the catalase family. Homotetramer. Heme is required as a cofactor.

It is found in the cytoplasm. It catalyses the reaction 2 H2O2 = O2 + 2 H2O. Occurs in almost all aerobically respiring organisms and serves to protect cells from the toxic effects of hydrogen peroxide. This Saccharomyces cerevisiae (strain YJM789) (Baker's yeast) protein is Catalase T (CTT1).